Consider the following 544-residue polypeptide: MSSTKPPTTTNKRKRTSNAHDEAPAKRVPEASSSKVTLDDSQPAPATSSDAVLGARSAPGTDYERVPFSTLNLSPPTTAAIERMGFETMTEVQARTIPPLLAGKDVLGAARTGSGKTMAFLIPSVELLSTLRFKPVNGTGVIIISPTRELALQIFGVAKELMQGHSQTFGVLMGGANRKAEADKLVKGVNLIVATPGRLLDHLQNTKGFVFKNLKALVIDEADRILEIGFEEEMKQIIKLLPSENRQSMLFSATQTTKVTDLARISLRPGPLYINVDETKEASTADMLEQGYVVCESDQRFMLLFTFLKKNLKKKVIVFFSSCNSVKYHAELLNYIDVPVLDLHGKQKQQKRTNTFFEFINAPAGILLCTDVAARGLDIPKVDWIIQFDPPDDPRDYIHRVGRTARAGKSGKSLLFLLPSELGFLRFLKVAKVPLNEYQFPQKKVADVQKQLESLISKNHYLNTSARDGYRSYLQAYASYSLKKIFDVNKLDLAKVGKAFGFAVPPKVNISVGSVKAKKSRDEDESSDDDGQPKKAYYRNRGRK.

A compositionally biased stretch (low complexity) spans 1–10; sequence MSSTKPPTTT. Positions 1-59 are disordered; that stretch reads MSSTKPPTTTNKRKRTSNAHDEAPAKRVPEASSSKVTLDDSQPAPATSSDAVLGARSAP. Over residues 18–29 the composition is skewed to basic and acidic residues; the sequence is NAHDEAPAKRVP. The segment covering 31–50 has biased composition (polar residues); that stretch reads ASSSKVTLDDSQPAPATSSD. A Q motif motif is present at residues 66-94; that stretch reads VPFSTLNLSPPTTAAIERMGFETMTEVQA. In terms of domain architecture, Helicase ATP-binding spans 97–273; the sequence is IPPLLAGKDV…RISLRPGPLY (177 aa). Position 110-117 (110-117) interacts with ATP; the sequence is ARTGSGKT. The DEAD box motif lies at 220–223; the sequence is DEAD. The Helicase C-terminal domain occupies 287-456; sequence MLEQGYVVCE…DVQKQLESLI (170 aa). The Bipartite nuclear localization signal motif lies at 299–315; sequence QRFMLLFTFLKKNLKKK. The segment at 513–544 is disordered; sequence GSVKAKKSRDEDESSDDDGQPKKAYYRNRGRK.

This sequence belongs to the DEAD box helicase family. DDX18/HAS1 subfamily. As to quaternary structure, associates in the nucleolus with the 60S and pre-60S ribosomal subunits.

The protein resides in the nucleus. It is found in the nucleolus. The enzyme catalyses ATP + H2O = ADP + phosphate + H(+). Its function is as follows. ATP-dependent RNA helicase involved in 40S ribosomal subunit biogenesis. Required for the processing and cleavage of 35S pre-rRNA at sites A0, A1, and A2, leading to mature 18S rRNA. The chain is ATP-dependent RNA helicase HAS1 (HAS1) from Cryptococcus neoformans var. neoformans serotype D (strain JEC21 / ATCC MYA-565) (Filobasidiella neoformans).